The following is a 120-amino-acid chain: MADSALELDDFLSRFQLLRPQPHAPPLNQRQAAVLVPIVRRPQPGLLLTQRSPLMRKHAGQVAFPGGAVDNSDATLIAAALREAQEEVAIPPESVEVIGVLPPVDSVTGFQVTPVVGIIP.

Residues 29–120 (QRQAAVLVPI…QVTPVVGIIP (92 aa)) form the Nudix hydrolase domain. A Nudix box motif is present at residues 67-89 (GAVDNSDATLIAAALREAQEEVA). Mg(2+) is bound by residues Glu-83 and Glu-87.

It belongs to the Nudix hydrolase family. PCD1 subfamily. Requires Mn(2+) as cofactor. Mg(2+) is required as a cofactor.

Functionally, probably mediates the hydrolysis of some nucleoside diphosphate derivatives. This is an uncharacterized protein from Klebsiella aerogenes (Enterobacter aerogenes).